The following is a 432-amino-acid chain: MTQLEYALSGIVTKEMKIVAEYEGVDEEFILEGVKKGEIVIPSNINHKNLIPKGIGRGLSTKVNANIGTSDAYPEIEKEIEKLNVAVKAGADAVMDLSTGGDINQSCRKILENSPVPVGTVPMYQAAVESISKYGSIVAMPEEFIFEVIEEQAKDGVDFITVHCGLTFESLKKLKDNGRVMDIVSRGGSFTIAWMLHNNKENPLYKHFDRLLDIAKKYDITLSLGDGLRPGCLEDATDAAQIQELIILGELVKKSREAGVQVMVEGPGHVPIDQIEANVKLQKQLCHNAPFYVLGPIVTDIAPGYDHITSAIGGAIAAASGADFLCYVTPAEHLGLPDKEDVKEGVIAAKIAAHAADIAKGVKGAKEKDLTMARARKALNWDEQIKLSIDPDKAFKYRVNKNISTAKTCSMCGKFCAMKIVSEYLGTSTMTC.

Substrate-binding positions include asparagine 66, methionine 95, tyrosine 124, histidine 163, 185–187, 226–229, and glutamate 265; these read SRG and DGLR. Histidine 269 provides a ligand contact to Zn(2+). A substrate-binding site is contributed by tyrosine 292. Position 333 (histidine 333) interacts with Zn(2+). [4Fe-4S] cluster-binding residues include cysteine 409, cysteine 412, and cysteine 416.

This sequence belongs to the ThiC family. Requires [4Fe-4S] cluster as cofactor.

The enzyme catalyses 5-amino-1-(5-phospho-beta-D-ribosyl)imidazole + S-adenosyl-L-methionine = 4-amino-2-methyl-5-(phosphooxymethyl)pyrimidine + CO + 5'-deoxyadenosine + formate + L-methionine + 3 H(+). Its pathway is cofactor biosynthesis; thiamine diphosphate biosynthesis. Functionally, catalyzes the synthesis of the hydroxymethylpyrimidine phosphate (HMP-P) moiety of thiamine from aminoimidazole ribotide (AIR) in a radical S-adenosyl-L-methionine (SAM)-dependent reaction. The sequence is that of Phosphomethylpyrimidine synthase from Thermoanaerobacter pseudethanolicus (strain ATCC 33223 / 39E) (Clostridium thermohydrosulfuricum).